The primary structure comprises 411 residues: Argininosuccinate synthase (411 aa).

ATP contacts are provided by residues 10–18 (AYSGGLDTS) and Ala37. L-citrulline contacts are provided by Tyr89 and Ser94. Position 119 (Gly119) interacts with ATP. Thr121, Asn125, and Asp126 together coordinate L-aspartate. Asn125 contacts L-citrulline. The L-citrulline site is built by Arg129, Ser178, Ser187, Glu263, and Tyr275.

This sequence belongs to the argininosuccinate synthase family. Type 1 subfamily. Homotetramer.

Its subcellular location is the cytoplasm. The catalysed reaction is L-citrulline + L-aspartate + ATP = 2-(N(omega)-L-arginino)succinate + AMP + diphosphate + H(+). It functions in the pathway amino-acid biosynthesis; L-arginine biosynthesis; L-arginine from L-ornithine and carbamoyl phosphate: step 2/3. The protein is Argininosuccinate synthase of Aeromonas salmonicida (strain A449).